The chain runs to 74 residues: MSKQDLIEMEGTVTESLPNAMFRVDLDNGFNVLAHISGKIRRNYIKILPGDRVKVELTPYDLTKGRITYRLRKK.

Residues 1-72 (MSKQDLIEME…TKGRITYRLR (72 aa)) form the S1-like domain.

This sequence belongs to the IF-1 family. Component of the 30S ribosomal translation pre-initiation complex which assembles on the 30S ribosome in the order IF-2 and IF-3, IF-1 and N-formylmethionyl-tRNA(fMet); mRNA recruitment can occur at any time during PIC assembly.

The protein localises to the cytoplasm. In terms of biological role, one of the essential components for the initiation of protein synthesis. Stabilizes the binding of IF-2 and IF-3 on the 30S subunit to which N-formylmethionyl-tRNA(fMet) subsequently binds. Helps modulate mRNA selection, yielding the 30S pre-initiation complex (PIC). Upon addition of the 50S ribosomal subunit IF-1, IF-2 and IF-3 are released leaving the mature 70S translation initiation complex. The chain is Translation initiation factor IF-1 from Trichodesmium erythraeum (strain IMS101).